The following is a 529-amino-acid chain: UDP-glucuronosyltransferase 2B7 (529 aa).

The signal sequence occupies residues 1–23; that stretch reads MSVKWTSVILLIQLSFCFSSGNC. N-linked (GlcNAc...) asparagine glycans are attached at residues Asn-67, Asn-68, and Asn-315. Residues 373–379 and Asp-398 each bind UDP-alpha-D-glucuronate; that span reads THGGANG. A helical membrane pass occupies residues 493 to 509; the sequence is VIGFLLVCVATVIFIVT.

It belongs to the UDP-glycosyltransferase family.

Its subcellular location is the endoplasmic reticulum membrane. It catalyses the reaction glucuronate acceptor + UDP-alpha-D-glucuronate = acceptor beta-D-glucuronoside + UDP + H(+). The enzyme catalyses 17alpha-estradiol + UDP-alpha-D-glucuronate = 17alpha-estradiol 17-O-(beta-D-glucuronate) + UDP + H(+). It carries out the reaction 17beta-estradiol + UDP-alpha-D-glucuronate = 17beta-estradiol 17-O-(beta-D-glucuronate) + UDP + H(+). The catalysed reaction is 2-hydroxy-17beta-estradiol + UDP-alpha-D-glucuronate = 2-hydroxy-17beta-estradiol 3-O-(beta-D-glucuronate) + UDP + H(+). It catalyses the reaction 4-hydroxy-17beta-estradiol + UDP-alpha-D-glucuronate = 17beta-estradiol 4-O-(beta-D-glucuronate) + UDP + H(+). The enzyme catalyses 4-hydroxyestrone + UDP-alpha-D-glucuronate = estrone 4-O-(beta-D-glucuronate) + UDP + H(+). It carries out the reaction 16alpha-hydroxyestrone + UDP-alpha-D-glucuronate = 16alpha-hydroxyestrone 16-O-(beta-D-glucuronate) + UDP + H(+). The catalysed reaction is 16alpha,17beta-estriol + UDP-alpha-D-glucuronate = 16alpha,17beta-estriol 16-O-(beta-D-glucuronate) + UDP + H(+). It catalyses the reaction 16beta,17beta-estriol + UDP-alpha-D-glucuronate = 16beta,17beta-estriol 16-O-(beta-D-glucuronate) + UDP + H(+). The enzyme catalyses 16alpha,17alpha-estriol + UDP-alpha-D-glucuronate = 16alpha,17alpha-estriol 16-O-(beta-D-glucuronate) + UDP + H(+). It carries out the reaction 16alpha,17alpha-estriol + UDP-alpha-D-glucuronate = 16alpha,17alpha-estriol 17-O-(beta-D-glucuronate) + UDP + H(+). The catalysed reaction is epitestosterone + UDP-alpha-D-glucuronate = epitestosterone 17-O-(beta-D-glucuronate) + UDP + H(+). It catalyses the reaction hyodeoxycholate + UDP-alpha-D-glucuronate = hyodeoxycholate 6-O-(beta-D-glucuronate) + UDP + H(+). The enzyme catalyses hyocholate + UDP-alpha-D-glucuronate = hyocholate 6-O-(beta-D-glucuronate) + UDP + H(+). It carries out the reaction all-trans-retinoate + UDP-alpha-D-glucuronate = all-trans-retinoyl-1-O-(beta-D-glucuronate) + UDP. The catalysed reaction is all-trans-4-hydroxyretinoate + UDP-alpha-D-glucuronate = all-trans-4-hydroxy-4-O-(beta-D-glucuronide)-retinoate + UDP + H(+). It catalyses the reaction (E)-ferulate + UDP-alpha-D-glucuronate = (E)-ferulic acid beta-D-glucuronate ester + UDP. The enzyme catalyses 8-iso-prostaglandin F2alpha + UDP-alpha-D-glucuronate = 8-iso-prostaglandin F2alpha-glucuronide + UDP + H(+). It carries out the reaction 5-epi-5-F2t-IsoP + UDP-alpha-D-glucuronate = 5-epi-5-F2t-IsoP-glucuronide + UDP + H(+). The catalysed reaction is (5Z,8Z,11Z,14Z)-eicosatetraenoate + UDP-alpha-D-glucuronate = O-[(5Z),(8Z),(11Z),(14Z)-eicosatetraenoyl]-beta-D-glucuronate + UDP. It catalyses the reaction 15-hydroxy-(5Z,8Z,11Z,13E)-eicosatetraenoate + UDP-alpha-D-glucuronate = 15-O-(beta-D-glucuronosyl)-(5Z,8Z,11Z,14Z)-eicosatetraenoate + UDP + H(+). The enzyme catalyses 20-hydroxy-(5Z,8Z,11Z,14Z)-eicosatetraenoate + UDP-alpha-D-glucuronate = 20-O-(beta-D-glucuronosyl)-(5Z,8Z,11Z,14Z)-eicosatetraenoate + UDP + H(+). It carries out the reaction (E)-ferulate + UDP-alpha-D-glucuronate = (E)-4-O-(beta-D-glucuronosyl)-ferulate + UDP + H(+). The catalysed reaction is prostaglandin B1 + UDP-alpha-D-glucuronate = 15-O-(beta-D-glucuronosyl)-prostaglandin B1 + UDP + H(+). It catalyses the reaction mycophenolate + UDP-alpha-D-glucuronate = mycophenolic acid O-acyl-beta-D-glucuronide + UDP. The enzyme catalyses losartan + UDP-alpha-D-glucuronate = losartan-2-N-beta-D-glucuronide + UDP. It carries out the reaction candesartan + UDP-alpha-D-glucuronate = candesartan O-beta-D-glucuronoside + UDP. The catalysed reaction is candesartan + UDP-alpha-D-glucuronate = candesartan-2-N-beta-D-glucuronide + UDP. It catalyses the reaction zolasartan + UDP-alpha-D-glucuronate = zolarsartan O-beta-D-glucuronoside + UDP. In terms of biological role, UDP-glucuronosyltransferase (UGT) that catalyzes phase II biotransformation reactions in which lipophilic substrates are conjugated with glucuronic acid to increase the metabolite's water solubility, thereby facilitating excretion into either the urine or bile. Essential for the elimination and detoxification of drugs, xenobiotics and endogenous compounds. Catalyzes the glucuronidation of endogenous steroid hormones such as androgens (epitestosterone, androsterone) and estrogens (estradiol, epiestradiol, estriol, catechol estrogens). Also regulates the levels of retinoic acid, a major metabolite of vitamin A involved in apoptosis, cellular growth and differentiation, and embryonic development. Contributes to bile acid (BA) detoxification by catalyzing the glucuronidation of BA substrates, which are natural detergents for dietary lipids absorption. Involved in the glucuronidation of arachidonic acid (AA) and AA-derived eicosanoids including 15-HETE, 20-HETE, PGE2, PGB1 and F2-isoprostanes (8-iso-PGF2alpha and 5-epi-5-F2t-IsoP). Involved in the glucuronidation of the phytochemical ferulic acid at the phenolic or the carboxylic acid group. Involved in the glucuronidation of the AGTR1 angiotensin receptor antagonist losartan, caderastan and zolarsatan, drugs which can inhibit the effect of angiotensin II. Also metabolizes mycophenolate, an immunosuppressive agent. This chain is UDP-glucuronosyltransferase 2B7, found in Homo sapiens (Human).